The primary structure comprises 303 residues: Type II methyltransferase M.MjaI (303 aa).

The protein belongs to the N(4)/N(6)-methyltransferase family. N(4) subfamily.

The enzyme catalyses a 2'-deoxycytidine in DNA + S-adenosyl-L-methionine = an N(4)-methyl-2'-deoxycytidine in DNA + S-adenosyl-L-homocysteine + H(+). Its function is as follows. A beta subtype methylase that recognizes the double-stranded sequence 5'-CTAG-3', methylates C-1 on both strands, and protects the DNA from cleavage by the MjaI endonuclease. The polypeptide is Type II methyltransferase M.MjaI (mjaIM) (Methanocaldococcus jannaschii (strain ATCC 43067 / DSM 2661 / JAL-1 / JCM 10045 / NBRC 100440) (Methanococcus jannaschii)).